Here is a 200-residue protein sequence, read N- to C-terminus: uncharacterized protein (200 aa).

Residues 1-19 (MNAMFHSLFALSFVSLVAS) form the signal peptide. The helical transmembrane segment at 148–168 (FMVIVSLAAFCISVLAGLALQ) threads the bilayer.

Its subcellular location is the membrane. This is an uncharacterized protein from Caenorhabditis elegans.